Consider the following 428-residue polypeptide: Pyruvate dehydrogenase E1 component subunit alpha-3, chloroplastic (428 aa).

A chloroplast-targeting transit peptide spans 1–61 (MATAFAPTKL…NATRRSPVVS (61 aa)). Pyruvate contacts are provided by His-115, Tyr-141, Arg-142, Ala-190, Ile-192, Asp-227, Gly-228, and Asn-256. Residues Tyr-141, Arg-142, Ala-190, Ile-192, Asp-227, Gly-228, Asn-256, and His-325 each contribute to the thiamine diphosphate site. Residue Asp-227 coordinates Mg(2+). Asn-256 is a binding site for Mg(2+).

Tetramer of 2 alpha and 2 beta subunits. The cofactor is thiamine diphosphate. Mg(2+) serves as cofactor.

Its subcellular location is the plastid. The protein localises to the chloroplast. The catalysed reaction is N(6)-[(R)-lipoyl]-L-lysyl-[protein] + pyruvate + H(+) = N(6)-[(R)-S(8)-acetyldihydrolipoyl]-L-lysyl-[protein] + CO2. In terms of biological role, the pyruvate dehydrogenase complex catalyzes the overall conversion of pyruvate to acetyl-CoA and CO(2). It contains multiple copies of three enzymatic components: pyruvate dehydrogenase (E1), dihydrolipoamide acetyltransferase (E2) and lipoamide dehydrogenase (E3). The protein is Pyruvate dehydrogenase E1 component subunit alpha-3, chloroplastic (PDH-E1 ALPHA) of Arabidopsis thaliana (Mouse-ear cress).